Reading from the N-terminus, the 143-residue chain is Hemoglobin subunit alpha (143 aa).

The region spanning 2-143 (RFSQDDEVLI…IVHVLISLYR (142 aa)) is the Globin domain. An O2-binding site is contributed by histidine 60. Position 89 (histidine 89) interacts with heme b.

Belongs to the globin family. In terms of assembly, heterotetramer of two alpha chains and two beta chains. Red blood cells.

In terms of biological role, involved in oxygen transport from the lung to the various peripheral tissues. This chain is Hemoglobin subunit alpha (HBA), found in Lepidosiren paradoxus (South American lungfish).